The sequence spans 712 residues: Prion-like (glutamine/asparagine-rich) domain bearing protein pqn-59 (712 aa).

Basic and acidic residues-rich tracts occupy residues 79 to 92 and 125 to 141; these read EQKG…KPEE and RESR…KEGA. 6 disordered regions span residues 79–172, 198–217, 228–265, 410–517, 594–624, and 659–712; these read EQKG…RAVA, TEVQ…TSSA, AAAH…SVAP, SRIM…QQHP, FNKF…ATNY, and AGGR…NWSN. The segment covering 156 to 165 has biased composition (gly residues); the sequence is GRGGRGGARG. The span at 241–255 shows a compositional bias: low complexity; the sequence is AQNPQPAAPPRRSLS. Positions 431 to 458 are enriched in polar residues; it reads LKSTSPPLSYGQSNRGLSYDTSSASYQP. Over residues 474-510 the composition is skewed to low complexity; that stretch reads PTQQSAQQHQPQQQQQQAPQQPVQQQQQTPPAQSQPT. Composition is skewed to polar residues over residues 597 to 612 and 683 to 696; these read FGSQ…QASN and AAQQ…QHNG.

The protein belongs to the Ubiquitin-associated-like family.

It is found in the cytoplasm. The protein resides in the stress granule. Its function is as follows. Antagonises the activities of multiple heterochronic microRNAs such as lin-4 and let-7 miRNAs. Modulates gene expression and cell fate specification during development. Plays a role in, but not strictly required for, the formation of stress granules. May be involved in protein translation and reducing the expression of mature microRNAs. The chain is Prion-like (glutamine/asparagine-rich) domain bearing protein pqn-59 from Caenorhabditis elegans.